Consider the following 896-residue polypeptide: Translation initiation factor IF-2 (896 aa).

The span at 93–219 (VKRDPQEAER…RMAEENEKNW (127 aa)) shows a compositional bias: basic and acidic residues. The segment at 93-307 (VKRDPQEAER…GSALQQGFQK (215 aa)) is disordered. Residues 256–271 (GRSRSSKAARPAKKGN) are compositionally biased toward basic residues. The segment covering 272-285 (KHAESKADREEARA) has biased composition (basic and acidic residues). In terms of domain architecture, tr-type G spans 395–564 (PRAPVVTIMG…LLQAEVLELK (170 aa)). The segment at 404-411 (GHVDHGKT) is G1. 404–411 (GHVDHGKT) provides a ligand contact to GTP. Residues 429–433 (GITQH) form a G2 region. The segment at 450 to 453 (DTPG) is G3. GTP is bound by residues 450–454 (DTPGH) and 504–507 (NKID). Positions 504 to 507 (NKID) are G4. A G5 region spans residues 540 to 542 (SAK).

This sequence belongs to the TRAFAC class translation factor GTPase superfamily. Classic translation factor GTPase family. IF-2 subfamily.

The protein localises to the cytoplasm. Its function is as follows. One of the essential components for the initiation of protein synthesis. Protects formylmethionyl-tRNA from spontaneous hydrolysis and promotes its binding to the 30S ribosomal subunits. Also involved in the hydrolysis of GTP during the formation of the 70S ribosomal complex. This Klebsiella pneumoniae subsp. pneumoniae (strain ATCC 700721 / MGH 78578) protein is Translation initiation factor IF-2.